We begin with the raw amino-acid sequence, 249 residues long: Leucyl/phenylalanyl-tRNA--protein transferase (249 aa).

This sequence belongs to the L/F-transferase family.

Its subcellular location is the cytoplasm. The enzyme catalyses N-terminal L-lysyl-[protein] + L-leucyl-tRNA(Leu) = N-terminal L-leucyl-L-lysyl-[protein] + tRNA(Leu) + H(+). It catalyses the reaction N-terminal L-arginyl-[protein] + L-leucyl-tRNA(Leu) = N-terminal L-leucyl-L-arginyl-[protein] + tRNA(Leu) + H(+). It carries out the reaction L-phenylalanyl-tRNA(Phe) + an N-terminal L-alpha-aminoacyl-[protein] = an N-terminal L-phenylalanyl-L-alpha-aminoacyl-[protein] + tRNA(Phe). Its function is as follows. Functions in the N-end rule pathway of protein degradation where it conjugates Leu, Phe and, less efficiently, Met from aminoacyl-tRNAs to the N-termini of proteins containing an N-terminal arginine or lysine. The chain is Leucyl/phenylalanyl-tRNA--protein transferase from Cupriavidus metallidurans (strain ATCC 43123 / DSM 2839 / NBRC 102507 / CH34) (Ralstonia metallidurans).